The primary structure comprises 72 residues: Small ribosomal subunit protein eS17 (72 aa).

This sequence belongs to the eukaryotic ribosomal protein eS17 family.

This Nanoarchaeum equitans (strain Kin4-M) protein is Small ribosomal subunit protein eS17.